A 177-amino-acid chain; its full sequence is Large ribosomal subunit protein uL6 (177 aa).

It belongs to the universal ribosomal protein uL6 family. Part of the 50S ribosomal subunit.

In terms of biological role, this protein binds to the 23S rRNA, and is important in its secondary structure. It is located near the subunit interface in the base of the L7/L12 stalk, and near the tRNA binding site of the peptidyltransferase center. The sequence is that of Large ribosomal subunit protein uL6 from Polynucleobacter necessarius subsp. necessarius (strain STIR1).